We begin with the raw amino-acid sequence, 267 residues long: NAD kinase 2 (267 aa).

Asp52 functions as the Proton acceptor in the catalytic mechanism. Residues 52–53 (DG), 124–125 (NE), Arg151, Asp153, 164–169 (TAYNKS), and Ala188 contribute to the NAD(+) site.

It belongs to the NAD kinase family. The cofactor is a divalent metal cation.

The protein resides in the cytoplasm. It carries out the reaction NAD(+) + ATP = ADP + NADP(+) + H(+). Functionally, involved in the regulation of the intracellular balance of NAD and NADP, and is a key enzyme in the biosynthesis of NADP. Catalyzes specifically the phosphorylation on 2'-hydroxyl of the adenosine moiety of NAD to yield NADP. The sequence is that of NAD kinase 2 from Bacillus subtilis (strain 168).